The following is a 251-amino-acid chain: 4-hydroxy-tetrahydrodipicolinate reductase (251 aa).

Residues 8-13 (GAKGRM), 76-78 (GTT), and 106-109 (APNF) each bind NAD(+). Residue His136 is the Proton donor/acceptor of the active site. Position 137 (His137) interacts with (S)-2,3,4,5-tetrahydrodipicolinate. Lys140 serves as the catalytic Proton donor. Residue 146-147 (GT) coordinates (S)-2,3,4,5-tetrahydrodipicolinate.

Belongs to the DapB family.

Its subcellular location is the cytoplasm. The catalysed reaction is (S)-2,3,4,5-tetrahydrodipicolinate + NAD(+) + H2O = (2S,4S)-4-hydroxy-2,3,4,5-tetrahydrodipicolinate + NADH + H(+). It catalyses the reaction (S)-2,3,4,5-tetrahydrodipicolinate + NADP(+) + H2O = (2S,4S)-4-hydroxy-2,3,4,5-tetrahydrodipicolinate + NADPH + H(+). The protein operates within amino-acid biosynthesis; L-lysine biosynthesis via DAP pathway; (S)-tetrahydrodipicolinate from L-aspartate: step 4/4. Catalyzes the conversion of 4-hydroxy-tetrahydrodipicolinate (HTPA) to tetrahydrodipicolinate. This chain is 4-hydroxy-tetrahydrodipicolinate reductase, found in Bifidobacterium longum (strain NCC 2705).